Here is an 834-residue protein sequence, read N- to C-terminus: DNA polymerase I, thermostable (834 aa).

One can recognise a 5'-3' exonuclease domain in the interval 176-262 (RPEQWVDFRA…DLPLEVDLAQ (87 aa)). A polymerase region spans residues 412-834 (ERLHRNLLKR…MGEDWLSAKG (423 aa)).

Belongs to the DNA polymerase type-A family.

The catalysed reaction is DNA(n) + a 2'-deoxyribonucleoside 5'-triphosphate = DNA(n+1) + diphosphate. In terms of biological role, in addition to polymerase activity, this DNA polymerase exhibits 5'-3' exonuclease activity. In Thermus thermophilus (strain ATCC 27634 / DSM 579 / HB8), this protein is DNA polymerase I, thermostable (polA).